We begin with the raw amino-acid sequence, 214 residues long: Small ribosomal subunit protein eS6 (214 aa).

This sequence belongs to the eukaryotic ribosomal protein eS6 family.

This is Small ribosomal subunit protein eS6 from Saccharolobus solfataricus (strain ATCC 35092 / DSM 1617 / JCM 11322 / P2) (Sulfolobus solfataricus).